The primary structure comprises 276 residues: Formamidopyrimidine-DNA glycosylase (276 aa).

Catalysis depends on Pro2, which acts as the Schiff-base intermediate with DNA. Catalysis depends on Glu3, which acts as the Proton donor. The active-site Proton donor; for beta-elimination activity is the Lys60. DNA contacts are provided by His93 and Arg112. The FPG-type zinc-finger motif lies at 240-274 (HVYGRKQQPCHHCDTAIEKTVVGGRGTHYCPNCQP). Residue Arg264 is the Proton donor; for delta-elimination activity of the active site.

This sequence belongs to the FPG family. Monomer. Requires Zn(2+) as cofactor.

It carries out the reaction Hydrolysis of DNA containing ring-opened 7-methylguanine residues, releasing 2,6-diamino-4-hydroxy-5-(N-methyl)formamidopyrimidine.. The catalysed reaction is 2'-deoxyribonucleotide-(2'-deoxyribose 5'-phosphate)-2'-deoxyribonucleotide-DNA = a 3'-end 2'-deoxyribonucleotide-(2,3-dehydro-2,3-deoxyribose 5'-phosphate)-DNA + a 5'-end 5'-phospho-2'-deoxyribonucleoside-DNA + H(+). Its function is as follows. Involved in base excision repair of DNA damaged by oxidation or by mutagenic agents. Acts as a DNA glycosylase that recognizes and removes damaged bases. Has a preference for oxidized purines, such as 7,8-dihydro-8-oxoguanine (8-oxoG). Has AP (apurinic/apyrimidinic) lyase activity and introduces nicks in the DNA strand. Cleaves the DNA backbone by beta-delta elimination to generate a single-strand break at the site of the removed base with both 3'- and 5'-phosphates. This chain is Formamidopyrimidine-DNA glycosylase, found in Shouchella clausii (strain KSM-K16) (Alkalihalobacillus clausii).